Consider the following 249-residue polypeptide: Uridylate kinase (249 aa).

Position 23–26 (23–26) interacts with ATP; that stretch reads KISG. The segment at 31 to 36 is involved in allosteric activation by GTP; it reads GDQGFG. UMP is bound at residue Gly-65. Residues Gly-66 and Arg-70 each contribute to the ATP site. UMP contacts are provided by residues Asp-85 and 146–153; that span reads TGNPYFTT. Residues Thr-173, Tyr-179, and Asp-182 each contribute to the ATP site.

It belongs to the UMP kinase family. As to quaternary structure, homohexamer.

The protein resides in the cytoplasm. It catalyses the reaction UMP + ATP = UDP + ADP. Its pathway is pyrimidine metabolism; CTP biosynthesis via de novo pathway; UDP from UMP (UMPK route): step 1/1. Its activity is regulated as follows. Allosterically activated by GTP. Inhibited by UTP. In terms of biological role, catalyzes the reversible phosphorylation of UMP to UDP. This is Uridylate kinase from Jannaschia sp. (strain CCS1).